The chain runs to 120 residues: Large ribosomal subunit protein bL17 (120 aa).

Belongs to the bacterial ribosomal protein bL17 family. Part of the 50S ribosomal subunit. Contacts protein L32.

The protein is Large ribosomal subunit protein bL17 of Mesomycoplasma hyopneumoniae (strain J / ATCC 25934 / NCTC 10110) (Mycoplasma hyopneumoniae).